The primary structure comprises 165 residues: Neurotrophin-3 (165 aa).

Positions 1–3 (IQS) are cleaved as a signal peptide. Positions 4–119 (TSMDQGSLTE…VLNRTSRRKR (116 aa)) are excised as a propeptide. Asn-112 carries an N-linked (GlcNAc...) asparagine glycan.

This sequence belongs to the NGF-beta family.

It localises to the secreted. Functionally, seems to promote the survival of visceral and proprioceptive sensory neurons. The sequence is that of Neurotrophin-3 (NTF3) from Calabaria reinhardtii (Calabar boa).